Consider the following 622-residue polypeptide: DNA topoisomerase 3 (622 aa).

One can recognise a Toprim domain in the interval 2 to 148; that stretch reads RVLCVAEKNS…SIQVIRADFN (147 aa). Residues 166-596 form the Topo IA-type catalytic domain; sequence SKNAADAVDA…MILTQFRDVF (431 aa). The O-(5'-phospho-DNA)-tyrosine intermediate role is filled by Tyr330.

It belongs to the type IA topoisomerase family. Interacts with hus2.

The enzyme catalyses ATP-independent breakage of single-stranded DNA, followed by passage and rejoining.. In terms of biological role, releases the supercoiling and torsional tension of DNA introduced during the DNA replication and transcription by transiently cleaving and rejoining one strand of the DNA duplex. Introduces a single-strand break via transesterification at a target site in duplex DNA. The scissile phosphodiester is attacked by the catalytic tyrosine of the enzyme, resulting in the formation of a DNA-(5'-phosphotyrosyl)-enzyme intermediate and the expulsion of a 3'-OH DNA strand. The free DNA strand than undergoes passage around the unbroken strand thus removing DNA supercoils. Finally, in the religation step, the DNA 3'-OH attacks the covalent intermediate to expel the active-site tyrosine and restore the DNA phosphodiester backbone. The sequence is that of DNA topoisomerase 3 (top3) from Schizosaccharomyces pombe (strain 972 / ATCC 24843) (Fission yeast).